Consider the following 1611-residue polypeptide: SH3 domain-containing protein C23A1.17 (1611 aa).

Residues 3 to 67 (SFPTRVVALY…PKDFTEPAED (65 aa)) form the SH3 domain. Disordered regions lie at residues 275–648 (THPA…PTSL), 662–741 (IDPP…PPGL), 762–851 (AVPR…NSLN), and 886–1365 (TPST…FSAK). Positions 278 to 296 (AASSTMATESSHQSPSADS) are enriched in polar residues. Residues 300-312 (ELSKSQRVAKDDD) are compositionally biased toward basic and acidic residues. A compositionally biased stretch (polar residues) spans 316–330 (VSNTANSDEPASSSK). Composition is skewed to acidic residues over residues 361-373 (SEQEEDEYDDAES) and 387-420 (SEPEDQDEPSEKDDENKDVEEEQEQEQEEEQIDP). Basic and acidic residues predominate over residues 421 to 433 (EEAKRIALRERMA). Over residues 472–494 (STTNDSSPPKDSSSTSTQPTEQS) the composition is skewed to low complexity. Over residues 576–586 (TQETSEQQVHK) the composition is skewed to polar residues. The segment covering 605-619 (FDKETLASNEAHEAV) has biased composition (basic and acidic residues). Low complexity predominate over residues 637–648 (SSSVVTPSPTSL). 3 stretches are compositionally biased toward polar residues: residues 799-808 (SRPSTGSQLR), 886-902 (TPSTATFQGHPTISNVA), and 923-940 (ATHQSSTGLTQEITQLGS). Pro residues-rich tracts occupy residues 963–974 (PAAPPSIPPPLP), 1022–1053 (PPVPLPSADAPPIPVPSTAPPVPIPTSTPPVP), and 1076–1241 (IPAP…PVPA). The span at 1242 to 1278 (PSSEAPSVSTPRSSVPSPHSNASPSPTSSSMASAAPA) shows a compositional bias: low complexity. A phosphoserine mark is found at serine 1258, serine 1261, and serine 1266. Residues 1300–1312 (KSSKSGEHHHHHN) are compositionally biased toward basic residues. A compositionally biased stretch (polar residues) spans 1317-1327 (DSSSTRTSLAH). Low complexity predominate over residues 1340-1350 (RSSSRASKKPS). Positions 1351–1362 (IVSTTGPFNESF) are enriched in polar residues. Phosphoserine is present on serine 1379. A Phosphothreonine modification is found at threonine 1380.

Its subcellular location is the cytoplasm. In Schizosaccharomyces pombe (strain 972 / ATCC 24843) (Fission yeast), this protein is SH3 domain-containing protein C23A1.17.